The following is a 246-amino-acid chain: 5-oxoprolinase subunit A (246 aa).

Belongs to the LamB/PxpA family. As to quaternary structure, forms a complex composed of PxpA, PxpB and PxpC.

It catalyses the reaction 5-oxo-L-proline + ATP + 2 H2O = L-glutamate + ADP + phosphate + H(+). Functionally, catalyzes the cleavage of 5-oxoproline to form L-glutamate coupled to the hydrolysis of ATP to ADP and inorganic phosphate. The chain is 5-oxoprolinase subunit A from Vibrio cholerae serotype O1 (strain M66-2).